A 298-amino-acid chain; its full sequence is 3-hydroxyisobutyrate dehydrogenase (298 aa).

NAD(+) is bound by residues 2–30, 65–66, and Thr-96; these read TDIAFLGLGNMGGPMAANLLKAGHRVNVF and LP. Lys-171 is a catalytic residue. Position 246 (Lys-246) interacts with NAD(+).

Belongs to the HIBADH-related family.

It carries out the reaction 3-hydroxy-2-methylpropanoate + NAD(+) = 2-methyl-3-oxopropanoate + NADH + H(+). It participates in amino-acid degradation; L-valine degradation. The protein is 3-hydroxyisobutyrate dehydrogenase of Pseudomonas aeruginosa (strain ATCC 15692 / DSM 22644 / CIP 104116 / JCM 14847 / LMG 12228 / 1C / PRS 101 / PAO1).